Here is a 518-residue protein sequence, read N- to C-terminus: Integrator complex subunit 14 (518 aa).

A VWFA domain is found at proline 2–leucine 204. Mg(2+) is bound by residues serine 10, serine 12, and threonine 86.

Belongs to the Integrator subunit 14 family. As to quaternary structure, component of the Integrator complex, composed of core subunits INTS1, INTS2, INTS3, INTS4, INTS5, INTS6, INTS7, INTS8, INTS9/RC74, INTS10, INTS11/CPSF3L, INTS12, INTS13, INTS14 and INTS15. The core complex associates with protein phosphatase 2A subunits PPP2CA and PPP2R1A, to form the Integrator-PP2A (INTAC) complex. INTS14 is part of the tail subcomplex, composed of INTS10, INTS13, INTS14 and INTS15.

It localises to the nucleus. Its function is as follows. Component of the integrator complex, a multiprotein complex that terminates RNA polymerase II (Pol II) transcription in the promoter-proximal region of genes. The integrator complex provides a quality checkpoint during transcription elongation by driving premature transcription termination of transcripts that are unfavorably configured for transcriptional elongation: the complex terminates transcription by (1) catalyzing dephosphorylation of the C-terminal domain (CTD) of Pol II subunit POLR2A/RPB1 and SUPT5H/SPT5, (2) degrading the exiting nascent RNA transcript via endonuclease activity and (3) promoting the release of Pol II from bound DNA. The integrator complex is also involved in terminating the synthesis of non-coding Pol II transcripts, such as enhancer RNAs (eRNAs), small nuclear RNAs (snRNAs), telomerase RNAs and long non-coding RNAs (lncRNAs). Within the integrator complex, INTS14 is part of the integrator tail module that acts as a platform for the recruitment of transcription factors at promoters. The polypeptide is Integrator complex subunit 14 (Xenopus tropicalis (Western clawed frog)).